The sequence spans 504 residues: Probable cytochrome P450 513E1 (504 aa).

Residues 1-21 form a helical membrane-spanning segment; the sequence is MNLYISILILIISLIIFFKNN. Position 450 (cysteine 450) interacts with heme.

It belongs to the cytochrome P450 family. Requires heme as cofactor.

It is found in the membrane. The chain is Probable cytochrome P450 513E1 (cyp513E1) from Dictyostelium discoideum (Social amoeba).